The sequence spans 382 residues: Alanine racemase (382 aa).

Catalysis depends on Lys-39, which acts as the Proton acceptor; specific for D-alanine. The residue at position 39 (Lys-39) is an N6-(pyridoxal phosphate)lysine. A substrate-binding site is contributed by Arg-138. Tyr-265 functions as the Proton acceptor; specific for L-alanine in the catalytic mechanism. Position 312 (Met-312) interacts with substrate.

It belongs to the alanine racemase family. It depends on pyridoxal 5'-phosphate as a cofactor.

The enzyme catalyses L-alanine = D-alanine. Its pathway is amino-acid biosynthesis; D-alanine biosynthesis; D-alanine from L-alanine: step 1/1. Catalyzes the interconversion of L-alanine and D-alanine. May also act on other amino acids. This Staphylococcus epidermidis (strain ATCC 35984 / DSM 28319 / BCRC 17069 / CCUG 31568 / BM 3577 / RP62A) protein is Alanine racemase (alr).